A 363-amino-acid polypeptide reads, in one-letter code: MHKQYHIAVLPGDGIGPEVMQEAYKILQVLREHFSLFIKTKEFDIGGIAIDNHGIALPKKTLIGCENSDAILLGSIGGKKWDTLPINERPERASLLPLRKHFNFFCNLRPSNLYKELNFLSPLRNDIVKHGFDILCVRELTGGIYFGKPRGRVTKKKLMYAFDTEIYYKFEIVRIAHLAFKLARSRKHKLCSIDKANVLESSILWREVVEEVSKEYPDVILSHLYIDNVCMQIIKDPNQFDVLLCSNLFGDIISDECAMITGSIGMLPSASLNEKNFGLYEPAGGSAPDIQGKNIANPIAQILSLSMLIRYSMNLNKIANKIDNAVINVLKKGYKTMDISKDQNYLKTNEMGDVIADFLKRDK.

78–91 lines the NAD(+) pocket; sequence GKKWDTLPINERPE. Substrate-binding residues include Arg99, Arg109, Arg138, and Asp227. Positions 227, 251, and 255 each coordinate Mg(2+). 285 to 297 provides a ligand contact to NAD(+); that stretch reads GSAPDIQGKNIAN.

This sequence belongs to the isocitrate and isopropylmalate dehydrogenases family. LeuB type 1 subfamily. Homodimer. Mg(2+) is required as a cofactor. It depends on Mn(2+) as a cofactor.

It localises to the cytoplasm. The enzyme catalyses (2R,3S)-3-isopropylmalate + NAD(+) = 4-methyl-2-oxopentanoate + CO2 + NADH. The protein operates within amino-acid biosynthesis; L-leucine biosynthesis; L-leucine from 3-methyl-2-oxobutanoate: step 3/4. Its function is as follows. Catalyzes the oxidation of 3-carboxy-2-hydroxy-4-methylpentanoate (3-isopropylmalate) to 3-carboxy-4-methyl-2-oxopentanoate. The product decarboxylates to 4-methyl-2 oxopentanoate. This Buchnera aphidicola subsp. Diuraphis noxia protein is 3-isopropylmalate dehydrogenase.